We begin with the raw amino-acid sequence, 313 residues long: Ribose-phosphate pyrophosphokinase (313 aa).

Residues 37–39 (DGE) and 96–97 (RQ) contribute to the ATP site. Mg(2+) is bound by residues H131 and D170. Residue K193 is part of the active site. Residues R195, D219, and 223–227 (DTAGT) each bind D-ribose 5-phosphate.

The protein belongs to the ribose-phosphate pyrophosphokinase family. Class I subfamily. In terms of assembly, homohexamer. Mg(2+) serves as cofactor.

It is found in the cytoplasm. It catalyses the reaction D-ribose 5-phosphate + ATP = 5-phospho-alpha-D-ribose 1-diphosphate + AMP + H(+). It participates in metabolic intermediate biosynthesis; 5-phospho-alpha-D-ribose 1-diphosphate biosynthesis; 5-phospho-alpha-D-ribose 1-diphosphate from D-ribose 5-phosphate (route I): step 1/1. In terms of biological role, involved in the biosynthesis of the central metabolite phospho-alpha-D-ribosyl-1-pyrophosphate (PRPP) via the transfer of pyrophosphoryl group from ATP to 1-hydroxyl of ribose-5-phosphate (Rib-5-P). This is Ribose-phosphate pyrophosphokinase from Pseudomonas syringae pv. tomato (strain ATCC BAA-871 / DC3000).